Here is a 377-residue protein sequence, read N- to C-terminus: Cytochrome b (377 aa).

4 helical membrane-spanning segments follow: residues 34 to 54 (FGFL…FLSM), 78 to 100 (WLLR…IHIA), 113 to 133 (TWMT…LGYV), and 179 to 199 (FFTL…IHLL). The heme b site is built by His-84 and His-98. His-183 and His-197 together coordinate heme b. His-202 contacts a ubiquinone. 4 helical membrane-spanning segments follow: residues 225–245 (FTIK…ILVL), 288–308 (KLGG…LPLY), 323–343 (MLFW…AQAI), and 352–372 (QILT…SVLW).

Belongs to the cytochrome b family. The main subunits of complex b-c1 are: cytochrome b, cytochrome c1 and the Rieske protein. Heme b is required as a cofactor.

The protein resides in the mitochondrion inner membrane. Functionally, component of the ubiquinol-cytochrome c reductase complex (complex III or cytochrome b-c1 complex) that is part of the mitochondrial respiratory chain. The b-c1 complex mediates electron transfer from ubiquinol to cytochrome c. Contributes to the generation of a proton gradient across the mitochondrial membrane that is then used for ATP synthesis. This is Cytochrome b (mt:Cyt-b) from Priapulus caudatus (Priapulid worm).